Reading from the N-terminus, the 558-residue chain is uncharacterized protein (558 aa).

Residues 531-558 (NEDDGTSASPTAMTFDMPPEHPFYSHYR) are disordered.

This is an uncharacterized protein from Saccharomyces cerevisiae (strain ATCC 204508 / S288c) (Baker's yeast).